Here is a 141-residue protein sequence, read N- to C-terminus: Acetyltransferase YpeA (141 aa).

Residues 1–141 enclose the N-acetyltransferase domain; sequence MEIRVFRQED…GKRLIEDEEY (141 aa).

The protein belongs to the acetyltransferase family. YpeA subfamily.

The chain is Acetyltransferase YpeA from Escherichia coli O157:H7.